The following is a 348-amino-acid chain: Protein-arginine N-acetylglucosaminyltransferase SseK2 (348 aa).

Residues 64-66 (QWF), Tyr-88, and 237-240 (YLDA) each bind UDP-N-acetyl-alpha-D-glucosamine. Residues 239 to 241 (DAD) carry the DXD motif motif. Asp-241 provides a ligand contact to Mn(2+). Residue Glu-271 is the Proton acceptor of the active site. UDP-N-acetyl-alpha-D-glucosamine-binding positions include Asn-338, Ser-340, and 345–348 (SSWR). Residues Asn-338 and Ser-340 each coordinate Mn(2+).

Belongs to the glycosyltransferase NleB family. Mn(2+) serves as cofactor.

It is found in the secreted. The protein resides in the host Golgi apparatus. It catalyses the reaction L-arginyl-[protein] + UDP-N-acetyl-alpha-D-glucosamine = N(omega)-(N-acetyl-beta-D-glucosaminyl)-L-arginyl-[protein] + UDP + H(+). Its activity is regulated as follows. Protein-arginine N-acetylglucosaminyltransferase activity is inhibited by 100066N compound (flavone analog) and 102644N compound (a substituted isoxazole). Protein-arginine N-acetylglucosaminyltransferase effector that catalyzes the transfer of a single N-acetylglucosamine (GlcNAc) to a conserved arginine residue in the death domain of host proteins such as FADD: arginine GlcNAcylation prevents homotypic/heterotypic death domain interactions. Also acts on host proteins without a death domain: catalyzes arginine GlcNAcylation of host small Rab1 GTPase, thereby preventing GTPase activity and leading to impaired host vesicular protein transport. In contrast to Ssek1, not able to disrupt TNF signaling in infected cells. This chain is Protein-arginine N-acetylglucosaminyltransferase SseK2, found in Salmonella typhimurium (strain SL1344).